We begin with the raw amino-acid sequence, 1538 residues long: Lhr helicase/uracil glycosylase (1538 aa).

Residues 1-897 are lhr-Core; that stretch reads MADNPDPSSL…ERRASVLSLD (897 aa). Positions 34, 57, 58, 179, 180, 398, 415, and 418 each coordinate ATP. The Helicase ATP-binding domain maps to 38 to 235; sequence WHVAARSEHA…FLGGDRPVTV (198 aa). The DEVH box signature appears at 179-182; it reads DEVH. The 179-residue stretch at 284-462 folds into the Helicase C-terminal domain; the sequence is GILDEVLRHR…NLTPPHNPLD (179 aa). A beta-sheet bundle region spans residues 463-552; that stretch reads VLAQQTVAAA…VTSGGTIPDR (90 aa). A WH domain region spans residues 553–623; sequence GMYSVLLPEG…SARLPFWRGE (71 aa). The domain 4 stretch occupies residues 624-897; sequence GNGRPAELGE…ERRASVLSLD (274 aa). The segment at 898–1538 is lhr-CTD; sequence SELLRNLLGQ…SSSPQGLDWG (641 aa). The tract at residues 1287 to 1312 is disordered; the sequence is SNARTSTRRSHRARRGRPVYAQPVSP. Over residues 1292–1303 the composition is skewed to basic residues; it reads STRRSHRARRGR.

It belongs to the Lhr helicase family. In terms of assembly, homooligomerizes, probably a homotetramer. The cofactor is Ca(2+). It depends on Uracil deglycosylase activity does not require a cofactor. as a cofactor.

The enzyme catalyses Couples ATP hydrolysis with the unwinding of duplex DNA by translocating in the 3'-5' direction.. It catalyses the reaction ATP + H2O = ADP + phosphate + H(+). It carries out the reaction Hydrolyzes single-stranded DNA or mismatched double-stranded DNA and polynucleotides, releasing free uracil.. In terms of biological role, a 3'-5' helicase probably involved in DNA repair. Translocates in an ATP-dependent manner 3'-to-5' on single-stranded (ss)DNA, unwinding any encountered duplex nucleic acid. An RNA:DNA hybrid with a 3'-ssDNA loading strand is a 4.5-fold better helicase substrate than 3'-tailed double-stranded (ds)DNA; substrates where the helicase loads on a 3'-ssRNA tail (DNA:RNA and RNA:RNA) are not unwound. Unlike its M.smegmatis counterpart, the ATPase is not ssDNA-dependent. Forms a clamp around the ssDNA loading strand. Excises uracil residues from DNA; forked DNA with a dU residue is the best substrate followed by ssDNA. Inactive on dsDNA with a dU residue or DNA with an 8-oxoguanine residue. Uracil residues in DNA can arise as a result of misincorporation of dUMP residues by DNA polymerase or due to deamination of cytosine. The chain is Lhr helicase/uracil glycosylase from Escherichia coli (strain K12).